Reading from the N-terminus, the 1096-residue chain is DNA-directed RNA polymerase subunit beta (1096 aa).

The segment at 1069-1096 (DLMQDVNPRRSTPSRPTYESLGSDYQED) is disordered.

This sequence belongs to the RNA polymerase beta chain family. In cyanobacteria the RNAP catalytic core is composed of 2 alpha, 1 beta, 1 beta', 1 gamma and 1 omega subunit. When a sigma factor is associated with the core the holoenzyme is formed, which can initiate transcription.

The catalysed reaction is RNA(n) + a ribonucleoside 5'-triphosphate = RNA(n+1) + diphosphate. DNA-dependent RNA polymerase catalyzes the transcription of DNA into RNA using the four ribonucleoside triphosphates as substrates. This is DNA-directed RNA polymerase subunit beta from Prochlorococcus marinus (strain SARG / CCMP1375 / SS120).